A 661-amino-acid polypeptide reads, in one-letter code: UvrABC system protein B (661 aa).

Residues 26–181 (KGIQEGRKHQ…LLRKLVDIQY (156 aa)) form the Helicase ATP-binding domain. Residue 39 to 46 (GATGTGKT) coordinates ATP. The short motif at 92–115 (YYDYYQPEAYVPQTDTFIEKDASI) is the Beta-hairpin element. A Helicase C-terminal domain is found at 430–596 (QIDDLIGEIQ…TINKEIRDVI (167 aa)). In terms of domain architecture, UVR spans 625–660 (QKVVEQMEHEMKEAARALDFERAAELRDLLLELKAE).

Belongs to the UvrB family. As to quaternary structure, forms a heterotetramer with UvrA during the search for lesions. Interacts with UvrC in an incision complex.

It localises to the cytoplasm. Functionally, the UvrABC repair system catalyzes the recognition and processing of DNA lesions. A damage recognition complex composed of 2 UvrA and 2 UvrB subunits scans DNA for abnormalities. Upon binding of the UvrA(2)B(2) complex to a putative damaged site, the DNA wraps around one UvrB monomer. DNA wrap is dependent on ATP binding by UvrB and probably causes local melting of the DNA helix, facilitating insertion of UvrB beta-hairpin between the DNA strands. Then UvrB probes one DNA strand for the presence of a lesion. If a lesion is found the UvrA subunits dissociate and the UvrB-DNA preincision complex is formed. This complex is subsequently bound by UvrC and the second UvrB is released. If no lesion is found, the DNA wraps around the other UvrB subunit that will check the other stand for damage. This is UvrABC system protein B from Bacillus velezensis (strain DSM 23117 / BGSC 10A6 / LMG 26770 / FZB42) (Bacillus amyloliquefaciens subsp. plantarum).